Reading from the N-terminus, the 341-residue chain is Anthranilate phosphoribosyltransferase (341 aa).

5-phospho-alpha-D-ribose 1-diphosphate-binding positions include Gly-79, Gly-82 to Asp-83, Thr-87, Asn-89 to Thr-92, Lys-107 to Ser-115, and Ser-119. Gly-79 contributes to the anthranilate binding site. Ser-91 is a binding site for Mg(2+). Residue Asn-110 participates in anthranilate binding. Arg-165 lines the anthranilate pocket. The Mg(2+) site is built by Asp-224 and Glu-225.

The protein belongs to the anthranilate phosphoribosyltransferase family. In terms of assembly, homodimer. Mg(2+) serves as cofactor.

The enzyme catalyses N-(5-phospho-beta-D-ribosyl)anthranilate + diphosphate = 5-phospho-alpha-D-ribose 1-diphosphate + anthranilate. It functions in the pathway amino-acid biosynthesis; L-tryptophan biosynthesis; L-tryptophan from chorismate: step 2/5. Functionally, catalyzes the transfer of the phosphoribosyl group of 5-phosphorylribose-1-pyrophosphate (PRPP) to anthranilate to yield N-(5'-phosphoribosyl)-anthranilate (PRA). This Symbiobacterium thermophilum (strain DSM 24528 / JCM 14929 / IAM 14863 / T) protein is Anthranilate phosphoribosyltransferase.